A 504-amino-acid chain; its full sequence is O-fucosyltransferase 39 (504 aa).

Residues 11-27 (WILSMFFFVVLFCNNVS) form a helical; Signal-anchor for type II membrane protein membrane-spanning segment. Asn115 is a glycosylation site (N-linked (GlcNAc...) asparagine). Residue 288 to 290 (HLR) participates in substrate binding. N-linked (GlcNAc...) asparagine glycans are attached at residues Asn359 and Asn460.

This sequence belongs to the glycosyltransferase GT106 family.

It is found in the membrane. The protein operates within glycan metabolism. The sequence is that of O-fucosyltransferase 39 from Arabidopsis thaliana (Mouse-ear cress).